A 208-amino-acid polypeptide reads, in one-letter code: MKNIHCINHPLIEHKLGILRAKETKPFQFRMLIDEISSFLLFEASKDFSLKEIEISTLIQKTTVKKLDEKIMICPILRAALGMLESVFKMIPDASVGFLGFVRNEETLKADFYFQKLPKDAKKRTAIVIDPMFATGGTAIEACNFLKSQGVKKIKFISILAAPQGLKKFSQMHDDVEVFVACIDEGLNEKGYIIPGLGDAGDRVFNTL.

5-phospho-alpha-D-ribose 1-diphosphate is bound by residues arginine 78, arginine 103, and 130-138 (DPMFATGGT). Uracil contacts are provided by residues isoleucine 193 and 198 to 200 (GDA). Aspartate 199 is a 5-phospho-alpha-D-ribose 1-diphosphate binding site.

This sequence belongs to the UPRTase family. Requires Mg(2+) as cofactor.

It carries out the reaction UMP + diphosphate = 5-phospho-alpha-D-ribose 1-diphosphate + uracil. Its pathway is pyrimidine metabolism; UMP biosynthesis via salvage pathway; UMP from uracil: step 1/1. With respect to regulation, allosterically activated by GTP. Functionally, catalyzes the conversion of uracil and 5-phospho-alpha-D-ribose 1-diphosphate (PRPP) to UMP and diphosphate. The protein is Uracil phosphoribosyltransferase of Campylobacter jejuni (strain RM1221).